We begin with the raw amino-acid sequence, 159 residues long: Serine-protein kinase RsbW (159 aa).

Belongs to the anti-sigma-factor family.

The catalysed reaction is L-seryl-[protein] + ATP = O-phospho-L-seryl-[protein] + ADP + H(+). It catalyses the reaction L-threonyl-[protein] + ATP = O-phospho-L-threonyl-[protein] + ADP + H(+). Its function is as follows. Negative regulator of sigma-B activity. Phosphorylates and inactivates its specific antagonist protein, RsbV. Upon phosphorylation of RsbV, RsbW is released and binds to sigma-B, thereby blocking its ability to form an RNA polymerase holoenzyme (E-sigma-B). The sequence is that of Serine-protein kinase RsbW from Staphylococcus aureus (strain MSSA476).